Here is a 192-residue protein sequence, read N- to C-terminus: 3-hydroxyanthranilate 3,4-dioxygenase 1 (192 aa).

R50 contributes to the O2 binding site. 3 residues coordinate Fe cation: H54, E60, and H102. Substrate is bound at residue E60. Substrate is bound by residues R106 and E116. A divalent metal cation is bound by residues C131, C134, C168, and C171.

The protein belongs to the 3-HAO family. Fe(2+) is required as a cofactor.

The protein resides in the cytoplasm. It carries out the reaction 3-hydroxyanthranilate + O2 = (2Z,4Z)-2-amino-3-carboxymuconate 6-semialdehyde. It functions in the pathway cofactor biosynthesis; NAD(+) biosynthesis; quinolinate from L-kynurenine: step 3/3. Catalyzes the oxidative ring opening of 3-hydroxyanthranilate to 2-amino-3-carboxymuconate semialdehyde, which spontaneously cyclizes to quinolinate. This is 3-hydroxyanthranilate 3,4-dioxygenase 1 (bna1-1) from Aspergillus oryzae (strain ATCC 42149 / RIB 40) (Yellow koji mold).